The following is a 370-amino-acid chain: tRNA-specific 2-thiouridylase MnmA (370 aa).

ATP-binding positions include 9–16 (GMSGGVDS) and Met35. Positions 95 to 97 (NPD) are interaction with target base in tRNA. The active-site Nucleophile is the Cys100. The cysteines at positions 100 and 196 are disulfide-linked. Gly124 lines the ATP pocket. Positions 146–148 (KDQ) are interaction with tRNA. The Cysteine persulfide intermediate role is filled by Cys196. Positions 308–309 (RY) are interaction with tRNA.

Belongs to the MnmA/TRMU family.

It is found in the cytoplasm. The catalysed reaction is S-sulfanyl-L-cysteinyl-[protein] + uridine(34) in tRNA + AH2 + ATP = 2-thiouridine(34) in tRNA + L-cysteinyl-[protein] + A + AMP + diphosphate + H(+). Functionally, catalyzes the 2-thiolation of uridine at the wobble position (U34) of tRNA, leading to the formation of s(2)U34. This chain is tRNA-specific 2-thiouridylase MnmA, found in Ralstonia nicotianae (strain ATCC BAA-1114 / GMI1000) (Ralstonia solanacearum).